We begin with the raw amino-acid sequence, 107 residues long: Quaternary ammonium compound-resistance protein QacH (107 aa).

4 helical membrane-spanning segments follow: residues 1–21, 26–46, 57–77, and 84–104; these read MPYL…AFLK, FSKL…FYFL, ITYA…SVLI, and LISI…NTFG.

It belongs to the drug/metabolite transporter (DMT) superfamily. Small multidrug resistance (SMR) (TC 2.A.7.1) family.

It is found in the cell membrane. Its function is as follows. Multidrug exporter. Is implicated for the resistance to bacteriocidal quaternary ammonium compounds. The sequence is that of Quaternary ammonium compound-resistance protein QacH (qacH) from Staphylococcus saprophyticus.